The following is a 53-amino-acid chain: Large ribosomal subunit protein eL24 (53 aa).

Positions 4, 7, 30, and 34 each coordinate Zn(2+). The segment at 4–34 (CSFCHEEIEPGTGKMYVKRDGTIYFFCSSKC) adopts a C4-type zinc-finger fold.

This sequence belongs to the eukaryotic ribosomal protein eL24 family. In terms of assembly, part of the 50S ribosomal subunit. Forms a cluster with proteins L3 and L14. Requires Zn(2+) as cofactor.

In terms of biological role, binds to the 23S rRNA. This chain is Large ribosomal subunit protein eL24, found in Methanothermobacter thermautotrophicus (strain ATCC 29096 / DSM 1053 / JCM 10044 / NBRC 100330 / Delta H) (Methanobacterium thermoautotrophicum).